We begin with the raw amino-acid sequence, 292 residues long: Phosphatidylserine decarboxylase proenzyme (292 aa).

Catalysis depends on charge relay system; for autoendoproteolytic cleavage activity residues Asp89, His146, and Ser252. Ser252 acts as the Schiff-base intermediate with substrate; via pyruvic acid; for decarboxylase activity in catalysis. Residue Ser252 is modified to Pyruvic acid (Ser); by autocatalysis.

Belongs to the phosphatidylserine decarboxylase family. PSD-B subfamily. Prokaryotic type I sub-subfamily. As to quaternary structure, heterodimer of a large membrane-associated beta subunit and a small pyruvoyl-containing alpha subunit. It depends on pyruvate as a cofactor. Post-translationally, is synthesized initially as an inactive proenzyme. Formation of the active enzyme involves a self-maturation process in which the active site pyruvoyl group is generated from an internal serine residue via an autocatalytic post-translational modification. Two non-identical subunits are generated from the proenzyme in this reaction, and the pyruvate is formed at the N-terminus of the alpha chain, which is derived from the carboxyl end of the proenzyme. The autoendoproteolytic cleavage occurs by a canonical serine protease mechanism, in which the side chain hydroxyl group of the serine supplies its oxygen atom to form the C-terminus of the beta chain, while the remainder of the serine residue undergoes an oxidative deamination to produce ammonia and the pyruvoyl prosthetic group on the alpha chain. During this reaction, the Ser that is part of the protease active site of the proenzyme becomes the pyruvoyl prosthetic group, which constitutes an essential element of the active site of the mature decarboxylase.

The protein resides in the cell membrane. It carries out the reaction a 1,2-diacyl-sn-glycero-3-phospho-L-serine + H(+) = a 1,2-diacyl-sn-glycero-3-phosphoethanolamine + CO2. It functions in the pathway phospholipid metabolism; phosphatidylethanolamine biosynthesis; phosphatidylethanolamine from CDP-diacylglycerol: step 2/2. In terms of biological role, catalyzes the formation of phosphatidylethanolamine (PtdEtn) from phosphatidylserine (PtdSer). The sequence is that of Phosphatidylserine decarboxylase proenzyme from Shewanella sp. (strain MR-7).